A 213-amino-acid chain; its full sequence is Octanoyltransferase (213 aa).

A BPL/LPL catalytic domain is found at 28-203 (GTSPETLLLL…RFPFLLDERL (176 aa)). Substrate contacts are provided by residues 66–73 (RGGDVTFH), 133–135 (SIG), and 146–148 (GFA). The Acyl-thioester intermediate role is filled by cysteine 164.

The protein belongs to the LipB family.

It is found in the cytoplasm. The enzyme catalyses octanoyl-[ACP] + L-lysyl-[protein] = N(6)-octanoyl-L-lysyl-[protein] + holo-[ACP] + H(+). The protein operates within protein modification; protein lipoylation via endogenous pathway; protein N(6)-(lipoyl)lysine from octanoyl-[acyl-carrier-protein]: step 1/2. Its function is as follows. Catalyzes the transfer of endogenously produced octanoic acid from octanoyl-acyl-carrier-protein onto the lipoyl domains of lipoate-dependent enzymes. Lipoyl-ACP can also act as a substrate although octanoyl-ACP is likely to be the physiological substrate. This Geobacter metallireducens (strain ATCC 53774 / DSM 7210 / GS-15) protein is Octanoyltransferase.